Reading from the N-terminus, the 175-residue chain is uncharacterized protein (175 aa).

The first 22 residues, 1–22 (MNRIVGILISILMLACIGVTMA), serve as a signal peptide directing secretion.

This is an uncharacterized protein from Archaeoglobus fulgidus (strain ATCC 49558 / DSM 4304 / JCM 9628 / NBRC 100126 / VC-16).